Consider the following 93-residue polypeptide: Small ribosomal subunit protein bS20 (93 aa).

The interval 72–93 (KNTASRKKSRLTRKFNSVYKAS) is disordered. Residues 74–84 (TASRKKSRLTR) are compositionally biased toward basic residues.

This sequence belongs to the bacterial ribosomal protein bS20 family.

Its function is as follows. Binds directly to 16S ribosomal RNA. The chain is Small ribosomal subunit protein bS20 from Carboxydothermus hydrogenoformans (strain ATCC BAA-161 / DSM 6008 / Z-2901).